A 328-amino-acid chain; its full sequence is DNA-directed RNA polymerase subunit alpha 2 (328 aa).

The segment at 1–234 (MQGSVIEFLK…EQLDAFVDLR (234 aa)) is alpha N-terminal domain (alpha-NTD). The tract at residues 248–328 (FDPILLRPVD…NWPPASLSED (81 aa)) is alpha C-terminal domain (alpha-CTD).

The protein belongs to the RNA polymerase alpha chain family. As to quaternary structure, homodimer. The RNAP catalytic core consists of 2 alpha, 1 beta, 1 beta' and 1 omega subunit. When a sigma factor is associated with the core the holoenzyme is formed, which can initiate transcription.

The enzyme catalyses RNA(n) + a ribonucleoside 5'-triphosphate = RNA(n+1) + diphosphate. In terms of biological role, DNA-dependent RNA polymerase catalyzes the transcription of DNA into RNA using the four ribonucleoside triphosphates as substrates. The chain is DNA-directed RNA polymerase subunit alpha 2 from Psychromonas ingrahamii (strain DSM 17664 / CCUG 51855 / 37).